A 430-amino-acid polypeptide reads, in one-letter code: Serine/threonine-protein kinase Sgk1 (430 aa).

The tract at residues 1 to 60 (MTVKTEAARSTLTYSRMRGMVAILIAFMKQRRMGLNDFIQKLANNSYACKHPEVQSYLKI) is necessary for localization to the mitochondria. Residues 66-92 (PELMNANPSPPPSPSQQINLGPSSNPH) form a disordered region. Phosphoserine is present on Ser74. Ser78 carries the phosphoserine; by MAPK7 modification. Residues 81-91 (QQINLGPSSNP) are compositionally biased toward polar residues. The Protein kinase domain occupies 98-354 (FHFLKVIGKG…FMEIKSHIFF (257 aa)). ATP-binding positions include 104 to 112 (IGKGSFGKV) and Lys127. Positions 131–141 (KKAILKKKEEK) match the Nuclear localization signal motif. Asp222 functions as the Proton acceptor in the catalytic mechanism. At Thr256 the chain carries Phosphothreonine; by PDPK1. The AGC-kinase C-terminal domain maps to 355–430 (SLINWDDLIN…SYAPPMDSFL (76 aa)). Thr368 carries the post-translational modification Phosphothreonine; by PKA. A phosphoserine mark is found at Ser396, Ser400, and Ser421.

Belongs to the protein kinase superfamily. AGC Ser/Thr protein kinase family. As to quaternary structure, homodimer; disulfide-linked. Forms a trimeric complex with FBXW7 and NOTCH1. Interacts with MAPK3/ERK1, MAPK1/ERK2, MAP2K1/MEK1, MAP2K2/MEK2, NEDD4, NEDD4L, MAPK7, CREB1, SLC9A3R2/NHERF2 and KCNJ1/ROMK1. Associates with the mammalian target of rapamycin complex 2 (mTORC2) via an interaction with MAPKAP1/SIN1. Interacts with MAPT/TAU. In terms of processing, regulated by phosphorylation. Activated by phosphorylation on Ser-421 by mTORC2, transforming it into a substrate for PDPK1 which phosphorylates it on Thr-256. Phosphorylation on Ser-396 and Ser-400 are also essential for its activity. Phosphorylation on Ser-78 by MAPK7 is required for growth factor-induced cell cycle progression. Post-translationally, ubiquitinated by NEDD4L; which promotes proteasomal degradation. Ubiquitinated by SYVN1 at the endoplasmic reticulum; which promotes rapid proteasomal degradation and maintains a high turnover rate in resting cells. In terms of tissue distribution, expressed in most tissues with highest levels in the ovary, thymus and lung. In the kidney, expressed within glomeruli of the cortex, at low levels in outer medulla and moderate levels in inner medulla and papilla.

The protein localises to the cytoplasm. Its subcellular location is the nucleus. It localises to the endoplasmic reticulum membrane. The protein resides in the cell membrane. It is found in the mitochondrion. The enzyme catalyses L-seryl-[protein] + ATP = O-phospho-L-seryl-[protein] + ADP + H(+). The catalysed reaction is L-threonyl-[protein] + ATP = O-phospho-L-threonyl-[protein] + ADP + H(+). Its activity is regulated as follows. Two specific sites, one in the kinase domain (Thr-256) and the other in the C-terminal regulatory region (Ser-421), need to be phosphorylated for its full activation. Phosphorylation at Ser-396 and Ser-400 are also essential for its activity. Activated by WNK1, WNK2, WNK3 and WNK4. In terms of biological role, serine/threonine-protein kinase which is involved in the regulation of a wide variety of ion channels, membrane transporters, cellular enzymes, transcription factors, neuronal excitability, cell growth, proliferation, survival, migration and apoptosis. Plays an important role in cellular stress response. Contributes to regulation of renal Na(+) retention, renal K(+) elimination, salt appetite, gastric acid secretion, intestinal Na(+)/H(+) exchange and nutrient transport, insulin-dependent salt sensitivity of blood pressure, salt sensitivity of peripheral glucose uptake, cardiac repolarization and memory consolidation. Up-regulates Na(+) channels: SCNN1A/ENAC, SCN5A and ASIC1/ACCN2, K(+) channels: KCNJ1/ROMK1, KCNA1-5, KCNQ1-5 and KCNE1, epithelial Ca(2+) channels: TRPV5 and TRPV6, chloride channels: BSND, CLCN2 and CFTR, glutamate transporters: SLC1A3/EAAT1, SLC1A2 /EAAT2, SLC1A1/EAAT3, SLC1A6/EAAT4 and SLC1A7/EAAT5, amino acid transporters: SLC1A5/ASCT2, SLC38A1/SN1 and SLC6A19, creatine transporter: SLC6A8, Na(+)/dicarboxylate cotransporter: SLC13A2/NADC1, Na(+)-dependent phosphate cotransporter: SLC34A2/NAPI-2B, glutamate receptor: GRIK2/GLUR6. Up-regulates carriers: SLC9A3/NHE3, SLC12A1/NKCC2, SLC12A3/NCC, SLC5A3/SMIT, SLC2A1/GLUT1, SLC5A1/SGLT1 and SLC15A2/PEPT2. Regulates enzymes: GSK3A/B, PMM2 and Na(+)/K(+) ATPase, and transcription factors: CTNNB1 and nuclear factor NF-kappa-B. Stimulates sodium transport into epithelial cells by enhancing the stability and expression of SCNN1A/ENAC. This is achieved by phosphorylating the NEDD4L ubiquitin E3 ligase, promoting its interaction with 14-3-3 proteins, thereby preventing it from binding to SCNN1A/ENAC and targeting it for degradation. Regulates store-operated Ca(+2) entry (SOCE) by stimulating ORAI1 and STIM1. Regulates KCNJ1/ROMK1 directly via its phosphorylation or indirectly via increased interaction with SLC9A3R2/NHERF2. Phosphorylates MDM2 and activates MDM2-dependent ubiquitination of p53/TP53. Phosphorylates SLC2A4/GLUT4 and up-regulates its activity. Phosphorylates APBB1/FE65 and promotes its localization to the nucleus. Phosphorylates FBXW7 and plays an inhibitory role in the NOTCH1 signaling. Phosphorylates FOXO1 resulting in its relocalization from the nucleus to the cytoplasm. Phosphorylates FOXO3, promoting its exit from the nucleus and interference with FOXO3-dependent transcription. Phosphorylates BRAF and MAP3K3/MEKK3 and inhibits their activity. Phosphorylates SLC9A3/NHE3 in response to dexamethasone, resulting in its activation and increased localization at the cell membrane. Phosphorylates CREB1. Necessary for vascular remodeling during angiogenesis. Phosphorylates MAPT/TAU and mediates microtubule depolymerization and neurite formation in hippocampal neurons. Phosphorylates MAPK1/ERK2 and activates it by enhancing its interaction with MAP2K1/MEK1 and MAP2K2/MEK2. May also play an important role in the development of particular groups of neurons in the postnatal brain. The sequence is that of Serine/threonine-protein kinase Sgk1 (Sgk1) from Rattus norvegicus (Rat).